A 101-amino-acid chain; its full sequence is MWGPNLGGFSDTQDATAEIQAIADQVKSQLEEKENKKFPVFKAVKFRSQVVAGMNYLIKVQVDEDDFVHIRVFESLPHENKPVALTSYQTNKVRHDELTYF.

Methionine 1 carries the post-translational modification N-acetylmethionine. Positions 49-53 (QVVAG) match the Secondary area of contact motif.

Belongs to the cystatin family.

The protein localises to the cytoplasm. In terms of biological role, strong inhibitor of papain and cathepsin L but poor inhibitor of cathepsin B. This Bos taurus (Bovine) protein is Stefin-C.